A 1130-amino-acid polypeptide reads, in one-letter code: Serine/threonine-protein kinase LATS1 (1130 aa).

The segment covering 1–11 has biased composition (basic and acidic residues); the sequence is MKRSEKPEGYR. Residues 1 to 71 are disordered; the sequence is MKRSEKPEGY…PRQVRNPPKF (71 aa). Over residues 19–30 the composition is skewed to polar residues; the sequence is PASNYTVSSRQM. Basic and acidic residues predominate over residues 46–64; that stretch reads DAAKAEHNMSKMSTEDPRQ. The UBA domain maps to 100 to 141; that stretch reads EVNPQMLQDLQAAGFDEDMVIQALQKTNNRSIEAAIEFISKM. The interval 149–276 is disordered; it reads EQMAAAAARP…SWEPNSQTKR (128 aa). The span at 167-179 shows a compositional bias: polar residues; it reads NVQQSVNRKQSWK. Residues 235-268 show a composition bias toward pro residues; sequence NPPPPPQVRSVTPPPPPRGQTPPPRGTTPPPPSW. Threonine 246 bears the Phosphothreonine mark. Serine 278 is modified (phosphoserine). Disordered stretches follow at residues 294–321, 365–405, 432–484, and 515–631; these read GAWQ…RGIS, AGTV…NGSI, NWPQ…PSAT, and THPS…ESRI. Positions 300-312 are enriched in pro residues; that stretch reads YPPPPLNTSPMNP. Positions 373-376 match the PPxY motif 1 motif; the sequence is PPPY. Residues 381 to 405 are compositionally biased toward polar residues; the sequence is ANGQSPSALQTGGSAAPSSYTNGSI. The segment covering 434-447 has biased composition (low complexity); it reads PQSSSAPAQSSPSS. Positions 454–482 are enriched in polar residues; sequence WQPNIPVRSNSFNNPLGNRASHSANSQPS. Residue serine 464 is modified to Phosphoserine; by NUAK1 and NUAK2. Positions 526–655 are interaction with YAP1; it reads TVQPSPFPEG…HVENVLKSHQ (130 aa). Residues 556 to 559 carry the PPxY motif 2 motif; the sequence is PPPY. A compositionally biased stretch (basic and acidic residues) spans 579 to 609; the sequence is PSKEDQPSLPKEDESEKSYENVDSGDKEKKQ. Serine 613 carries the phosphoserine modification. The span at 621–630 shows a compositional bias: basic and acidic residues; it reads KKDEERRESR. Phosphoserine is present on serine 674. Residues 705–1010 enclose the Protein kinase domain; sequence FVKIKTLGIG…ADEIKAHPFF (306 aa). ATP contacts are provided by residues 711–719 and lysine 734; that span reads LGIGAFGEV. The active-site Proton acceptor is the aspartate 828. Serine 909 is subject to Phosphoserine; by STK3/MST2. The AGC-kinase C-terminal domain maps to 1011-1090; the sequence is KTIDFSSDLR…RRFFDDNGYP (80 aa). At threonine 1079 the chain carries Phosphothreonine; by STK3/MST2. Residues 1104 to 1130 form a disordered region; that stretch reads SQGSEQQSDEDDQNTGSEIKNRDLVYV.

Belongs to the protein kinase superfamily. AGC Ser/Thr protein kinase family. In terms of assembly, complexes with CDK1 in early mitosis. LATS1-associated CDK1 has no mitotic cyclin partner and no apparent kinase activity. Binds phosphorylated ZYX, locating this protein to the mitotic spindle and suggesting a role for actin regulatory proteins during mitosis. Binds to and colocalizes with LIMK1 at the actomyosin contractile ring during cytokinesis. Interacts (via PPxY motif 2) with YAP1 (via WW domains). Interacts with MOB1A and MOB1B. Interacts with LIMD1, WTIP and AJUBA. Interacts with ESR1, DCAF1 and DCAF13; probably recruits DCAF1 and DCAF13 to ESR1 to promote ESR1 ubiquitination and ubiquitin-mediated proteasomal degradation. Interacts with STK3/MST2; this interaction is inhibited in the presence of DLG5. Interacts with SCRIB in the presence of DLG5. Interacts with WWTR1/TAZ. Interacts with WWC1, WWC2 and WWC3 (via their WW domains). Requires Mg(2+) as cofactor. Autophosphorylated and phosphorylated during M-phase of the cell cycle. Phosphorylated by STK3/MST2 at Ser-909 and Thr-1079, which results in its activation. Phosphorylated by MAP4Ks; in parallel to STK3/MST2 and resulting to its activation. Phosphorylation at Ser-464 by NUAK1 and NUAK2 leads to decreased protein level and is required to regulate cellular senescence and cellular ploidy. In terms of tissue distribution, expressed in all adult tissues examined except for lung and kidney.

It localises to the cytoplasm. The protein localises to the cytoskeleton. Its subcellular location is the microtubule organizing center. It is found in the centrosome. The protein resides in the spindle. It localises to the midbody. The protein localises to the spindle pole body. It carries out the reaction L-seryl-[protein] + ATP = O-phospho-L-seryl-[protein] + ADP + H(+). It catalyses the reaction L-threonyl-[protein] + ATP = O-phospho-L-threonyl-[protein] + ADP + H(+). In terms of biological role, negative regulator of YAP1 in the Hippo signaling pathway that plays a pivotal role in organ size control and tumor suppression by restricting proliferation and promoting apoptosis. The core of this pathway is composed of a kinase cascade wherein STK3/MST2 and STK4/MST1, in complex with its regulatory protein SAV1, phosphorylates and activates LATS1/2 in complex with its regulatory protein MOB1, which in turn phosphorylates and inactivates YAP1 oncoprotein and WWTR1/TAZ. Phosphorylation of YAP1 by LATS1 inhibits its translocation into the nucleus to regulate cellular genes important for cell proliferation, cell death, and cell migration. Acts as a tumor suppressor which plays a critical role in maintenance of ploidy through its actions in both mitotic progression and the G1 tetraploidy checkpoint. Negatively regulates G2/M transition by down-regulating CDK1 kinase activity. Involved in the control of p53 expression. Affects cytokinesis by regulating actin polymerization through negative modulation of LIMK1. May also play a role in endocrine function. Plays a role in mammary gland epithelial cell differentiation, both through the Hippo signaling pathway and the intracellular estrogen receptor signaling pathway by promoting the degradation of ESR1. Acts as an activator of the NLRP3 inflammasome by mediating phosphorylation of 'Ser-265' of NLRP3 following NLRP3 palmitoylation, promoting NLRP3 activation by NEK7. The chain is Serine/threonine-protein kinase LATS1 from Homo sapiens (Human).